The chain runs to 165 residues: Dihydrofolate reductase (165 aa).

Residues 3 to 165 (VVGLIWAQST…RYRLHSYHRS (163 aa)) form the DHFR domain. 7–9 (IWA) contacts substrate. NADP(+)-binding positions include 8-9 (WA) and 16-21 (IGRDGG). Asp29 contacts substrate. Residue 45-48 (GRRT) participates in NADP(+) binding. Arg62 is a binding site for substrate. Residues 67 to 70 (LSRQ) and 100 to 105 (IGGEQI) contribute to the NADP(+) site. A substrate-binding site is contributed by Thr119.

The protein belongs to the dihydrofolate reductase family.

It carries out the reaction (6S)-5,6,7,8-tetrahydrofolate + NADP(+) = 7,8-dihydrofolate + NADPH + H(+). It functions in the pathway cofactor biosynthesis; tetrahydrofolate biosynthesis; 5,6,7,8-tetrahydrofolate from 7,8-dihydrofolate: step 1/1. In terms of biological role, key enzyme in folate metabolism. Catalyzes an essential reaction for de novo glycine and purine synthesis, and for DNA precursor synthesis. The polypeptide is Dihydrofolate reductase (folA) (Mycobacterium leprae (strain TN)).